Consider the following 877-residue polypeptide: Polycomb protein Scm (877 aa).

The segment at M1 to P57 is disordered. The segment covering S7 to T50 has biased composition (low complexity). The FCS-type zinc-finger motif lies at R54–A93. Zn(2+)-binding residues include C63, C66, C87, and C91. MBT repeat units follow at residues F175–P273 and S281–P382. Disordered stretches follow at residues N535 to V621, T652 to A692, and A713 to P735. Residue T546 is modified to Phosphothreonine. A phosphoserine mark is found at S549 and S550. Residues Q560–S569 show a composition bias toward polar residues. S585 is modified (phosphoserine). Over residues A598–K620 the composition is skewed to low complexity. Residues S724–P735 show a composition bias toward low complexity. Positions W806–A876 constitute an SAM domain.

The protein belongs to the SCM family. In terms of assembly, scm associates with the PRC1 core complex containing PSC, PC, PH and Sce/RING1. Forms homotypic and heterotypic interactions. Interacts with the SAM domain of ph-p via its SAM domain in vitro. Interacts with corto in vitro.

It is found in the nucleus. In terms of biological role, polycomb group (PcG) protein. PcG proteins act by forming multiprotein complexes, which are required to maintain the transcriptionally repressive state of homeotic genes throughout development. PcG proteins are not required to initiate repression, but to maintain it during later stages of development. They probably act via the methylation of histones, rendering chromatin heritably changed in its expressibility. This chain is Polycomb protein Scm, found in Drosophila melanogaster (Fruit fly).